A 1235-amino-acid chain; its full sequence is Myosin-1 (1235 aa).

The interval 1 to 34 is disordered; the sequence is MGITKRSKDKAARAERSAGGDKSSSAKPKKATFD. Basic and acidic residues predominate over residues 9–19; that stretch reads DKAARAERSAG. One can recognise a Myosin motor domain in the interval 41–715; that stretch reads IGVSDLTLLS…TLFALEHMRD (675 aa). Position 134–141 (134–141) interacts with ATP; sequence GESGAGKT. Residues 405–487 are actin-binding; that stretch reads SIGILDIYGF…PGIFSAMKDA (83 aa). 2 consecutive IQ domains span residues 719 to 739 and 740 to 765; these read HNMA…RAEA and AIRI…EGHK. The 190-residue stretch at 773–962 folds into the TH1 domain; sequence RRRMSILGSR…TVHTQPGEPP (190 aa). 2 disordered regions span residues 949-1076 and 1135-1235; these read YKSS…AAKP and APPV…EDDW. Positions 982–1046 are enriched in low complexity; the sequence is KGKLIKPGGP…PGAAATPAAA (65 aa). Residues 1050–1062 show a composition bias toward polar residues; the sequence is PSHTRQQSSTSTV. Over residues 1063–1073 the composition is skewed to pro residues; the sequence is RPPPPPPPAPA. Positions 1075–1134 constitute an SH3 domain; sequence KPKIMAKVLYDFAGTRENELSIKAGDMIEIVQKENNGWWLAKTPEGQAWVPAAYVEEQAP. Residues 1135–1150 are compositionally biased toward pro residues; that stretch reads APPVVAPRPPPPPPPA. Polar residues predominate over residues 1180 to 1210; it reads SLQNRDSGMSLNGANGSGSDASRSSTPTPSI.

This sequence belongs to the TRAFAC class myosin-kinesin ATPase superfamily. Myosin family.

It is found in the cytoplasm. The protein resides in the cytoskeleton. It localises to the actin patch. Functionally, type-I myosin implicated in the organization of the actin cytoskeleton. Required for proper actin cytoskeleton polarization. At the cell cortex, assembles in patch-like structures together with proteins from the actin-polymerizing machinery and promotes actin assembly. Functions as actin nucleation-promoting factor (NPF) for the Arp2/3 complex. The sequence is that of Myosin-1 (myo-1) from Neurospora crassa (strain ATCC 24698 / 74-OR23-1A / CBS 708.71 / DSM 1257 / FGSC 987).